The chain runs to 313 residues: tRNA uridine(34) hydroxylase (313 aa).

The Rhodanese domain occupies 127-225 (SDPDTILIDT…YLETVPEEES (99 aa)). Cys-185 serves as the catalytic Cysteine persulfide intermediate.

The protein belongs to the TrhO family.

The enzyme catalyses uridine(34) in tRNA + AH2 + O2 = 5-hydroxyuridine(34) in tRNA + A + H2O. Catalyzes oxygen-dependent 5-hydroxyuridine (ho5U) modification at position 34 in tRNAs. This Gluconobacter oxydans (strain 621H) (Gluconobacter suboxydans) protein is tRNA uridine(34) hydroxylase.